The sequence spans 534 residues: EH domain-containing protein 1 (534 aa).

At Met-1 the chain carries N-acetylmethionine. The region spanning 55-286 (FDNKPMVLLV…DLFKDIQSLP (232 aa)) is the Dynamin-type G domain. The interval 65-72 (GQYSTGKT) is G1 motif. Position 65-72 (65-72 (GQYSTGKT)) interacts with ATP. The tract at residues 91 to 92 (EP) is G2 motif. Residues 153 to 156 (DTPG) form a G3 motif region. A coiled-coil region spans residues 198 to 227 (DEFSEVIKALKNHEDKIRVVLNKADQIETQ). Positions 219–222 (NKAD) are G4 motif. Lys-220 contacts ATP. A region of interest (G5 motif) is located at residue Ile-243. ATP is bound at residue Trp-258. Residues Ser-355 and Ser-456 each carry the phosphoserine modification. The EH domain maps to 444–532 (DKPTYDEIFY…PHLVPPSKRR (89 aa)). In terms of domain architecture, EF-hand spans 476–511 (LPNTVLGKIWKLADVDKDGLLDDEEFALANHLIKVK). Asp-489, Asp-491, Asp-493, and Glu-500 together coordinate Ca(2+).

It belongs to the TRAFAC class dynamin-like GTPase superfamily. Dynamin/Fzo/YdjA family. EHD subfamily. Homooligomer, and heterooligomer with EHD2, EHD3 and EHD4, ATP-binding is required for heterooligomerization. Interacts (via EH domain) with MICALL1 (via NPF1 motif); the interaction is direct and recruits EHD1 to membranes. Interacts with RAB35; the interaction is indirect through MICALL1 and recruits EHD1 to membranes. Interacts (via EH domain) with PACSIN2 (via NPF motifs); regulates localization to tubular recycling endosome membranes. Interacts with PACSIN1. Interacts with RAB8A. Interacts with FER1L5 (via second C2 domain). Interacts with MYOF. Interacts with ZFYVE20. Interacts (via EH domain) with RAB11FIP2.

The protein resides in the recycling endosome membrane. It is found in the early endosome membrane. The protein localises to the cell membrane. It localises to the cell projection. Its subcellular location is the cilium membrane. In terms of biological role, ATP- and membrane-binding protein that controls membrane reorganization/tubulation upon ATP hydrolysis. Acts in early endocytic membrane fusion and membrane trafficking of recycling endosomes. Recruited to endosomal membranes upon nerve growth factor stimulation, indirectly regulates neurite outgrowth. Plays a role in myoblast fusion. Involved in the unidirectional retrograde dendritic transport of endocytosed BACE1 and in efficient sorting of BACE1 to axons implicating a function in neuronal APP processing. Plays a role in the formation of the ciliary vesicle (CV), an early step in cilium biogenesis. Proposed to be required for the fusion of distal appendage vesicles (DAVs) to form the CV by recruiting SNARE complex component SNAP29. Is required for recruitment of transition zone proteins CEP290, RPGRIP1L, TMEM67 and B9D2, and of IFT20 following DAV reorganization before Rab8-dependent ciliary membrane extension. Required for the loss of CCP110 form the mother centriole essential for the maturation of the basal body during ciliogenesis. In Pongo abelii (Sumatran orangutan), this protein is EH domain-containing protein 1.